We begin with the raw amino-acid sequence, 256 residues long: Adenylate kinase (256 aa).

Position 49 to 54 (49 to 54 (GAGKGT)) interacts with ATP. Positions 69–98 (ATGDMLRDQVEKKTPLGIAAKKIMDAGGLV) are NMP. Residues T70, R75, 96–98 (GLV), 125–128 (GFPR), and Q132 contribute to the AMP site. The tract at residues 166–203 (GRLIHPASGRSYHKIFNPPKKAGIDDLTGEPLIQRSDD) is LID. ATP is bound by residues R167 and 176-177 (SY). 2 residues coordinate AMP: R200 and R211. Q239 is a binding site for ATP.

It belongs to the adenylate kinase family. AK2 subfamily. In terms of assembly, monomer.

The protein localises to the cytoplasm. It localises to the cytosol. It is found in the mitochondrion intermembrane space. It carries out the reaction AMP + ATP = 2 ADP. Functionally, catalyzes the reversible transfer of the terminal phosphate group between ATP and AMP. Plays an important role in cellular energy homeostasis and in adenine nucleotide metabolism. Adenylate kinase activity is critical for regulation of the phosphate utilization and the AMP de novo biosynthesis pathways. The sequence is that of Adenylate kinase from Coprinopsis cinerea (strain Okayama-7 / 130 / ATCC MYA-4618 / FGSC 9003) (Inky cap fungus).